We begin with the raw amino-acid sequence, 450 residues long: Glucose-6-phosphate isomerase (450 aa).

The Proton donor role is filled by E289. Active-site residues include H310 and K424.

The protein belongs to the GPI family.

The protein resides in the cytoplasm. The catalysed reaction is alpha-D-glucose 6-phosphate = beta-D-fructose 6-phosphate. It participates in carbohydrate biosynthesis; gluconeogenesis. The protein operates within carbohydrate degradation; glycolysis; D-glyceraldehyde 3-phosphate and glycerone phosphate from D-glucose: step 2/4. In terms of biological role, catalyzes the reversible isomerization of glucose-6-phosphate to fructose-6-phosphate. The polypeptide is Glucose-6-phosphate isomerase (Leptospira biflexa serovar Patoc (strain Patoc 1 / Ames)).